The following is a 202-amino-acid chain: ER membrane protein complex subunit 7 homolog (202 aa).

The signal sequence occupies residues Met-1–Thr-23. Residues Ile-148–Pro-168 form a helical membrane-spanning segment. The disordered stretch occupies residues Met-179–Arg-202. Residues Ala-182 to Arg-202 are compositionally biased toward polar residues.

It belongs to the EMC7 family.

Its subcellular location is the membrane. This is ER membrane protein complex subunit 7 homolog from Arabidopsis thaliana (Mouse-ear cress).